Consider the following 204-residue polypeptide: Putative AgrB-like protein (204 aa).

The next 5 helical transmembrane spans lie at 52–74, 87–107, 111–131, 151–168, and 173–190; these read YGIA…YLWL, LNCT…FQNI, NWIV…FAPA, AMIG…IPFA, and LIMV…PLTY.

The protein belongs to the AgrB family.

The protein localises to the cell membrane. In terms of biological role, may be involved in the proteolytic processing of a quorum sensing system signal molecule precursor. This Listeria monocytogenes serovar 1/2a (strain ATCC BAA-679 / EGD-e) protein is Putative AgrB-like protein.